The chain runs to 220 residues: Adenylate kinase (220 aa).

10–15 (GAGKGT) lines the ATP pocket. The NMP stretch occupies residues 30 to 59 (STGDLFRANISQQTELGKLAKSYMDEGNLV). Residues Thr31, Arg36, 57 to 59 (NLV), 85 to 88 (GFPR), and Gln92 contribute to the AMP site. Positions 126–164 (GRRICRNDSAHVFHVSYKPPKQEGVCDVCGGELYQRDDD) are LID. ATP contacts are provided by residues Arg127 and 137 to 138 (VF). Positions 161 and 172 each coordinate AMP. Gly200 provides a ligand contact to ATP.

It belongs to the adenylate kinase family. In terms of assembly, monomer.

The protein resides in the cytoplasm. It catalyses the reaction AMP + ATP = 2 ADP. It functions in the pathway purine metabolism; AMP biosynthesis via salvage pathway; AMP from ADP: step 1/1. Functionally, catalyzes the reversible transfer of the terminal phosphate group between ATP and AMP. Plays an important role in cellular energy homeostasis and in adenine nucleotide metabolism. The protein is Adenylate kinase of Streptomyces avermitilis (strain ATCC 31267 / DSM 46492 / JCM 5070 / NBRC 14893 / NCIMB 12804 / NRRL 8165 / MA-4680).